The chain runs to 685 residues: Threonine--tRNA ligase (685 aa).

The region spanning 1–65 (MSTPASAAPA…DTDVEVEPVA (65 aa)) is the TGS domain. The tract at residues 262 to 568 (DHRKLGSELD…LTEHYAGAFP (307 aa)) is catalytic. Residues C367, H418, and H545 each contribute to the Zn(2+) site.

This sequence belongs to the class-II aminoacyl-tRNA synthetase family. As to quaternary structure, homodimer. It depends on Zn(2+) as a cofactor.

It localises to the cytoplasm. The enzyme catalyses tRNA(Thr) + L-threonine + ATP = L-threonyl-tRNA(Thr) + AMP + diphosphate + H(+). Its function is as follows. Catalyzes the attachment of threonine to tRNA(Thr) in a two-step reaction: L-threonine is first activated by ATP to form Thr-AMP and then transferred to the acceptor end of tRNA(Thr). Also edits incorrectly charged L-seryl-tRNA(Thr). The sequence is that of Threonine--tRNA ligase from Rhodococcus jostii (strain RHA1).